Consider the following 270-residue polypeptide: Monofunctional glycosyltransferase (270 aa).

Residues 1–10 (MKRSQRMNNS) show a composition bias toward polar residues. The disordered stretch occupies residues 1–36 (MKRSQRMNNSPERHSQYRNEPHYNTYYQPVGKPPKK). Residues 11-21 (PERHSQYRNEP) are compositionally biased toward basic and acidic residues. A helical transmembrane segment spans residues 42–62 (IFLRLFIIFVFIYALFIGLMY).

The protein belongs to the glycosyltransferase 51 family.

It localises to the cell membrane. The enzyme catalyses [GlcNAc-(1-&gt;4)-Mur2Ac(oyl-L-Ala-gamma-D-Glu-L-Lys-D-Ala-D-Ala)](n)-di-trans,octa-cis-undecaprenyl diphosphate + beta-D-GlcNAc-(1-&gt;4)-Mur2Ac(oyl-L-Ala-gamma-D-Glu-L-Lys-D-Ala-D-Ala)-di-trans,octa-cis-undecaprenyl diphosphate = [GlcNAc-(1-&gt;4)-Mur2Ac(oyl-L-Ala-gamma-D-Glu-L-Lys-D-Ala-D-Ala)](n+1)-di-trans,octa-cis-undecaprenyl diphosphate + di-trans,octa-cis-undecaprenyl diphosphate + H(+). Its pathway is cell wall biogenesis; peptidoglycan biosynthesis. In terms of biological role, peptidoglycan polymerase that catalyzes glycan chain elongation using lipid-linked disaccharide-pentapeptide as the substrate. The sequence is that of Monofunctional glycosyltransferase from Staphylococcus haemolyticus (strain JCSC1435).